A 246-amino-acid polypeptide reads, in one-letter code: Probable transcriptional regulatory protein YebC (246 aa).

Positions 1–20 (MAGHSKWANTRHRKAAQDAK) are disordered.

The protein belongs to the TACO1 family.

It is found in the cytoplasm. This chain is Probable transcriptional regulatory protein YebC, found in Salmonella choleraesuis (strain SC-B67).